A 554-amino-acid polypeptide reads, in one-letter code: Sesquithujene synthase A (554 aa).

Mg(2+)-binding residues include Asp-308 and Asp-312. Substrate-binding residues include Asp-308 and Asp-312. A DDXXD motif motif is present at residues 308-312; that stretch reads DDMFD. Residues 407–411 form a determine the stereoselectivity of the enzyme region; the sequence is SIGAN. Substrate contacts are provided by Arg-449 and Asn-452. Positions 452, 456, and 460 each coordinate Mg(2+).

Belongs to the terpene synthase family. Monomer. The cofactor is Mg(2+). Mn(2+) is required as a cofactor. As to expression, highly expressed in the husk. Detected in leaves.

It is found in the cytoplasm. It carries out the reaction (2E,6E)-farnesyl diphosphate = sesquithujene + diphosphate. It catalyses the reaction (2Z,6Z)-farnesyl diphosphate = (1S,5S,6S)-alpha-bergamotene + diphosphate. The catalysed reaction is (2E,6E)-farnesyl diphosphate = (E)-beta-farnesene + diphosphate. The enzyme catalyses (2E,6E)-farnesyl diphosphate = (S)-beta-bisabolene + diphosphate. It carries out the reaction (2Z,6E)-farnesyl diphosphate = (-)-beta-curcumene + diphosphate. It catalyses the reaction (2E,6E)-farnesyl diphosphate = gamma-curcumene + diphosphate. The catalysed reaction is (2E,6E)-farnesyl diphosphate = sesquisabinene B + diphosphate. The protein operates within secondary metabolite biosynthesis; terpenoid biosynthesis. Sesquiterpene synthase involved in the production after herbivore attack of a blend of volatiles that attracts natural enemies of herbivores. Converts farnesyl diphosphate to sesquithujene, (S)-beta-bisabolene, (Z)-alpha-bergamotene, sesquisabinene B and several minor products. Can also act in vitro as a monoterpene synthase, converting geranyl diphosphate to (S)-(-)-limonene, beta-myrcene and 11 other monoterpenes. The sequence is that of Sesquithujene synthase A from Zea mays (Maize).